A 281-amino-acid polypeptide reads, in one-letter code: MAFSDLTSRTVHLYDNWIKDADPRVEDWLLMSSPLPQTILLGFYVYFVTSLGPKLMENRKPFELKKAMITYNFFIVLFSVYMCYEFVMSGWGIGYSFRCDIVDYSRSPTALRMARTCWLYYFSKFIELLDTIFFVLRKKNSQVTFLHVFHHTIMPWTWWFGVKFAAGGLGTFHALLNTAVHVVMYSYYGLSALGPAYQKYLWWKKYLTSLQLVQFVIVAIHISQFFFMEDCKYQFPVFACIIMSYSFMFLLLFLHFWYRAYTKGQRLPKTVKNGTCKNKDN.

An N-acetylalanine modification is found at A2. At 2–27 the chain is on the lumenal side; it reads AFSDLTSRTVHLYDNWIKDADPRVED. The helical transmembrane segment at 28-48 threads the bilayer; sequence WLLMSSPLPQTILLGFYVYFV. The Cytoplasmic portion of the chain corresponds to 49–72; sequence TSLGPKLMENRKPFELKKAMITYN. Residues 73–93 form a helical membrane-spanning segment; that stretch reads FFIVLFSVYMCYEFVMSGWGI. The Lumenal portion of the chain corresponds to 94–115; that stretch reads GYSFRCDIVDYSRSPTALRMAR. C99 and C231 are joined by a disulfide. The helical transmembrane segment at 116-136 threads the bilayer; sequence TCWLYYFSKFIELLDTIFFVL. 5 residues coordinate 3-oxoeicosanoyl-CoA: K124, R137, K139, Q142, and H147. Residues 137–142 are Cytoplasmic-facing; the sequence is RKKNSQ. The chain crosses the membrane as a helical span at residues 143-162; that stretch reads VTFLHVFHHTIMPWTWWFGV. The HxxHH motif signature appears at 147–151; it reads HVFHH. H150 (nucleophile) is an active-site residue. Residues 163–171 lie on the Lumenal side of the membrane; that stretch reads KFAAGGLGT. Residues 172–194 traverse the membrane as a helical segment; that stretch reads FHALLNTAVHVVMYSYYGLSALG. Residues Y187, K204, T208, and Q211 each coordinate 3-oxoeicosanoyl-CoA. The Cytoplasmic portion of the chain corresponds to 195–206; sequence PAYQKYLWWKKY. The chain crosses the membrane as a helical span at residues 207 to 227; sequence LTSLQLVQFVIVAIHISQFFF. Residues 228–236 lie on the Lumenal side of the membrane; that stretch reads MEDCKYQFP. A helical membrane pass occupies residues 237-257; the sequence is VFACIIMSYSFMFLLLFLHFW. The Cytoplasmic portion of the chain corresponds to 258–281; the sequence is YRAYTKGQRLPKTVKNGTCKNKDN. R266 contacts 3-oxoeicosanoyl-CoA. The short motif at 277–281 is the Di-lysine motif element; sequence KNKDN.

It belongs to the ELO family. ELOVL7 subfamily. In terms of assembly, homodimer. Interacts with TECR. As to expression, expressed in most tissues except heart and skeletal muscle.

It localises to the endoplasmic reticulum membrane. The enzyme catalyses a very-long-chain acyl-CoA + malonyl-CoA + H(+) = a very-long-chain 3-oxoacyl-CoA + CO2 + CoA. The catalysed reaction is eicosanoyl-CoA + malonyl-CoA + H(+) = 3-oxodocosanoyl-CoA + CO2 + CoA. It catalyses the reaction (5Z,8Z,11Z,14Z)-eicosatetraenoyl-CoA + malonyl-CoA + H(+) = (7Z,10Z,13Z,16Z)-3-oxodocosatetraenoyl-CoA + CO2 + CoA. It carries out the reaction (6Z,9Z,12Z)-octadecatrienoyl-CoA + malonyl-CoA + H(+) = (8Z,11Z,14Z)-3-oxoeicosatrienoyl-CoA + CO2 + CoA. The enzyme catalyses (9Z,12Z)-octadecadienoyl-CoA + malonyl-CoA + H(+) = (11Z,14Z)-3-oxoicosa-11,14-dienoyl-CoA + CO2 + CoA. The catalysed reaction is (9Z)-octadecenoyl-CoA + malonyl-CoA + H(+) = 3-oxo-(11Z)-eicosenoyl-CoA + CO2 + CoA. It catalyses the reaction octadecanoyl-CoA + malonyl-CoA + H(+) = 3-oxoeicosanoyl-CoA + CO2 + CoA. It carries out the reaction hexadecanoyl-CoA + malonyl-CoA + H(+) = 3-oxooctadecanoyl-CoA + CO2 + CoA. The enzyme catalyses (9Z,12Z,15Z)-octadecatrienoyl-CoA + malonyl-CoA + H(+) = (11Z,14Z,17Z)-3-oxoeicosatrienoyl-CoA + CO2 + CoA. Its pathway is lipid metabolism; fatty acid biosynthesis. Its function is as follows. Catalyzes the first and rate-limiting reaction of the four reactions that constitute the long-chain fatty acids elongation cycle. This endoplasmic reticulum-bound enzymatic process allows the addition of 2 carbons to the chain of long- and very long-chain fatty acids (VLCFAs) per cycle. Condensing enzyme with higher activity toward C18 acyl-CoAs, especially C18:3(n-3) acyl-CoAs and C18:3(n-6)-CoAs. Also active toward C20:4-, C18:0-, C18:1-, C18:2- and C16:0-CoAs, and weakly toward C20:0-CoA. Little or no activity toward C22:0-, C24:0-, or C26:0-CoAs. May participate in the production of saturated and polyunsaturated VLCFAs of different chain lengths that are involved in multiple biological processes as precursors of membrane lipids and lipid mediators. In Homo sapiens (Human), this protein is Very long chain fatty acid elongase 7.